An 87-amino-acid polypeptide reads, in one-letter code: Small ribosomal subunit protein uS17 (87 aa).

The protein belongs to the universal ribosomal protein uS17 family. In terms of assembly, part of the 30S ribosomal subunit.

In terms of biological role, one of the primary rRNA binding proteins, it binds specifically to the 5'-end of 16S ribosomal RNA. This Geobacillus kaustophilus (strain HTA426) protein is Small ribosomal subunit protein uS17.